The chain runs to 446 residues: Signal recognition particle 54 kDa protein (446 aa).

Residues 103–110 (GVQGTGKT), 185–189 (DTAGR), and 245–248 (TKMD) contribute to the GTP site.

Belongs to the GTP-binding SRP family. SRP54 subfamily. In terms of assembly, part of the signal recognition particle protein translocation system, which is composed of SRP and FtsY. Archaeal SRP consists of a 7S RNA molecule of 300 nucleotides and two protein subunits: SRP54 and SRP19.

The protein localises to the cytoplasm. The enzyme catalyses GTP + H2O = GDP + phosphate + H(+). Involved in targeting and insertion of nascent membrane proteins into the cytoplasmic membrane. Binds to the hydrophobic signal sequence of the ribosome-nascent chain (RNC) as it emerges from the ribosomes. The SRP-RNC complex is then targeted to the cytoplasmic membrane where it interacts with the SRP receptor FtsY. This chain is Signal recognition particle 54 kDa protein, found in Metallosphaera sedula (strain ATCC 51363 / DSM 5348 / JCM 9185 / NBRC 15509 / TH2).